We begin with the raw amino-acid sequence, 241 residues long: Large ribosomal subunit protein uL3 (241 aa).

2 disordered regions span residues 139-164 (VSHRSIGSTGGRQDPGKTFKNKKMPG) and 215-241 (DAPKPGKFRLANGGEEAAAPAAEQEGV). Residue Gln151 is modified to N5-methylglutamine. Residues 225–241 (ANGGEEAAAPAAEQEGV) show a composition bias toward low complexity.

This sequence belongs to the universal ribosomal protein uL3 family. Part of the 50S ribosomal subunit. Forms a cluster with proteins L14 and L19. In terms of processing, methylated by PrmB.

Its function is as follows. One of the primary rRNA binding proteins, it binds directly near the 3'-end of the 23S rRNA, where it nucleates assembly of the 50S subunit. The protein is Large ribosomal subunit protein uL3 of Rhodopseudomonas palustris (strain HaA2).